Reading from the N-terminus, the 230-residue chain is V-type proton ATPase subunit E1 (230 aa).

Position 1 is an N-acetylmethionine (Met-1). Residues 8 to 67 are a coiled coil; the sequence is RQIQQMVRFIRQEAEEKANEISVSAEEEFNIEKLQLVEAEKKKIRQDYEKKEKQADVRKK. Ser-178 carries the phosphoserine modification.

This sequence belongs to the V-ATPase E subunit family. V-ATPase is a heteromultimeric enzyme composed of a peripheral catalytic V1 complex (components A to H) attached to an integral membrane V0 proton pore complex (components: a, c, c'', d and e).

The protein resides in the vacuole membrane. Subunit of the peripheral V1 complex of vacuolar ATPase essential for assembly or catalytic function. V-ATPase is responsible for acidifying a variety of intracellular compartments in eukaryotic cells. Required for Golgi organization and vacuole function in embryogenesis. The sequence is that of V-type proton ATPase subunit E1 (VHA-E1) from Arabidopsis thaliana (Mouse-ear cress).